Consider the following 309-residue polypeptide: Fe-S cluster assembly protein dre2 (309 aa).

The N-terminal SAM-like domain stretch occupies residues 1–132 (MTTTIVLASP…LRRPAQVEAV (132 aa)). Residues 133 to 195 (PLKLSTKKSA…DALVSDEETQ (63 aa)) form a linker region. Cys-207, Cys-216, Cys-219, and Cys-221 together coordinate [2Fe-2S] cluster. The fe-S binding site A stretch occupies residues 207 to 221 (CSKPGKKKRCKNCTC). [4Fe-4S] cluster-binding residues include Cys-265, Cys-268, Cys-276, and Cys-279. 2 short sequence motifs (cx2C motif) span residues 265-268 (CGSC) and 276-279 (CSGC). The segment at 265–279 (CGSCYLGDAFRCSGC) is fe-S binding site B.

This sequence belongs to the anamorsin family. Monomer. Interacts with TAH18. Interacts with MIA40. [2Fe-2S] cluster is required as a cofactor. Requires [4Fe-4S] cluster as cofactor.

It localises to the cytoplasm. The protein localises to the mitochondrion intermembrane space. Component of the cytosolic iron-sulfur (Fe-S) protein assembly (CIA) machinery required for the maturation of extramitochondrial Fe-S proteins. Part of an electron transfer chain functioning in an early step of cytosolic Fe-S biogenesis, facilitating the de novo assembly of a [4Fe-4S] cluster on the scaffold complex CFD1-NBP35. Electrons are transferred to DRE2 from NADPH via the FAD- and FMN-containing protein TAH18. TAH18-DRE2 are also required for the assembly of the diferric tyrosyl radical cofactor of ribonucleotide reductase (RNR), probably by providing electrons for reduction during radical cofactor maturation in the catalytic small subunit RNR2. In Schizosaccharomyces japonicus (strain yFS275 / FY16936) (Fission yeast), this protein is Fe-S cluster assembly protein dre2.